We begin with the raw amino-acid sequence, 224 residues long: Cytidylate kinase (224 aa).

11 to 19 (GPAAAGKST) lines the ATP pocket.

Belongs to the cytidylate kinase family. Type 1 subfamily.

The protein localises to the cytoplasm. It catalyses the reaction CMP + ATP = CDP + ADP. It carries out the reaction dCMP + ATP = dCDP + ADP. The protein is Cytidylate kinase of Bacillus velezensis (strain DSM 23117 / BGSC 10A6 / LMG 26770 / FZB42) (Bacillus amyloliquefaciens subsp. plantarum).